Reading from the N-terminus, the 482-residue chain is Probable cytosol aminopeptidase (482 aa).

Residues Lys251 and Asp256 each coordinate Mn(2+). Lys263 is an active-site residue. The Mn(2+) site is built by Asp274, Asp333, and Glu335. Arg337 is an active-site residue.

It belongs to the peptidase M17 family. It depends on Mn(2+) as a cofactor.

It is found in the cytoplasm. It catalyses the reaction Release of an N-terminal amino acid, Xaa-|-Yaa-, in which Xaa is preferably Leu, but may be other amino acids including Pro although not Arg or Lys, and Yaa may be Pro. Amino acid amides and methyl esters are also readily hydrolyzed, but rates on arylamides are exceedingly low.. It carries out the reaction Release of an N-terminal amino acid, preferentially leucine, but not glutamic or aspartic acids.. In terms of biological role, presumably involved in the processing and regular turnover of intracellular proteins. Catalyzes the removal of unsubstituted N-terminal amino acids from various peptides. The protein is Probable cytosol aminopeptidase of Acinetobacter baylyi (strain ATCC 33305 / BD413 / ADP1).